A 400-amino-acid polypeptide reads, in one-letter code: Cysteine desulfurase (400 aa).

Pyridoxal 5'-phosphate-binding positions include 72–73, Asn-152, Gln-180, and 200–202; these read GT and SGH. Lys-203 carries the post-translational modification N6-(pyridoxal phosphate)lysine. Thr-238 is a pyridoxal 5'-phosphate binding site. Residue Cys-326 is the Cysteine persulfide intermediate of the active site. Cys-326 is a [2Fe-2S] cluster binding site.

Belongs to the class-V pyridoxal-phosphate-dependent aminotransferase family. NifS/IscS subfamily. As to quaternary structure, homodimer. Pyridoxal 5'-phosphate serves as cofactor.

It catalyses the reaction (sulfur carrier)-H + L-cysteine = (sulfur carrier)-SH + L-alanine. Functionally, catalyzes the removal of elemental sulfur atoms from cysteine to produce alanine. Seems to participate in the biosynthesis of the nitrogenase metalloclusters by providing the inorganic sulfur required for the Fe-S core formation. The chain is Cysteine desulfurase from Gluconacetobacter diazotrophicus (strain ATCC 49037 / DSM 5601 / CCUG 37298 / CIP 103539 / LMG 7603 / PAl5).